A 509-amino-acid chain; its full sequence is Methionine--tRNA ligase (509 aa).

The 'HIGH' region signature appears at 12 to 22 (YYVNDVPHIGH). Positions 295–299 (KISKS) match the 'KMSKS' region motif. Lys298 serves as a coordination point for ATP.

This sequence belongs to the class-I aminoacyl-tRNA synthetase family. MetG type 2B subfamily. Monomer.

It localises to the cytoplasm. The enzyme catalyses tRNA(Met) + L-methionine + ATP = L-methionyl-tRNA(Met) + AMP + diphosphate. Its function is as follows. Is required not only for elongation of protein synthesis but also for the initiation of all mRNA translation through initiator tRNA(fMet) aminoacylation. This is Methionine--tRNA ligase from Rickettsia bellii (strain RML369-C).